The sequence spans 344 residues: N-acetyl-gamma-glutamyl-phosphate reductase (344 aa).

Residue Cys149 is part of the active site.

The protein belongs to the NAGSA dehydrogenase family. Type 1 subfamily.

The protein localises to the cytoplasm. The catalysed reaction is N-acetyl-L-glutamate 5-semialdehyde + phosphate + NADP(+) = N-acetyl-L-glutamyl 5-phosphate + NADPH + H(+). Its pathway is amino-acid biosynthesis; L-arginine biosynthesis; N(2)-acetyl-L-ornithine from L-glutamate: step 3/4. Catalyzes the NADPH-dependent reduction of N-acetyl-5-glutamyl phosphate to yield N-acetyl-L-glutamate 5-semialdehyde. The sequence is that of N-acetyl-gamma-glutamyl-phosphate reductase from Thermoanaerobacter sp. (strain X514).